Here is a 534-residue protein sequence, read N- to C-terminus: 5'-nucleotidase domain-containing protein 3 (534 aa).

Asp104 acts as the Nucleophile in catalysis. Residues Asp104 and Asp106 each coordinate Mg(2+). Asp106 functions as the Proton donor in the catalytic mechanism. Position 234 to 242 (234 to 242 (KEAIRDVHV)) interacts with substrate. Residue Asp372 participates in Mg(2+) binding.

Belongs to the 5'(3')-deoxyribonucleotidase family. Requires Mg(2+) as cofactor.

In Xenopus tropicalis (Western clawed frog), this protein is 5'-nucleotidase domain-containing protein 3 (nt5dc3).